Reading from the N-terminus, the 342-residue chain is tRNA N6-adenosine threonylcarbamoyltransferase (342 aa).

2 residues coordinate Fe cation: His-114 and His-118. Substrate-binding positions include 136-140 (LVSGG), Asp-169, Gly-182, Asp-186, and Asn-275. Asp-301 contributes to the Fe cation binding site.

Belongs to the KAE1 / TsaD family. Requires Fe(2+) as cofactor.

Its subcellular location is the cytoplasm. The catalysed reaction is L-threonylcarbamoyladenylate + adenosine(37) in tRNA = N(6)-L-threonylcarbamoyladenosine(37) in tRNA + AMP + H(+). Its function is as follows. Required for the formation of a threonylcarbamoyl group on adenosine at position 37 (t(6)A37) in tRNAs that read codons beginning with adenine. Is involved in the transfer of the threonylcarbamoyl moiety of threonylcarbamoyl-AMP (TC-AMP) to the N6 group of A37, together with TsaE and TsaB. TsaD likely plays a direct catalytic role in this reaction. The protein is tRNA N6-adenosine threonylcarbamoyltransferase of Streptococcus pyogenes serotype M18 (strain MGAS8232).